The following is an 809-amino-acid chain: Chloride channel protein F (809 aa).

Residues 1–65 (MSTSKYSKMI…SWAKFARLNN (65 aa)) are Cytoplasmic-facing. 11 helical membrane passes run 66-86 (FYIW…LVAV), 110-130 (LQYL…CFII), 152-172 (FWNP…GLLL), 218-238 (AACC…GVLF), 246-266 (FYLI…AVGI), 295-315 (LIAF…FISL), 333-353 (ITPF…SFPL), 395-415 (GIIL…AVSI), 425-445 (IPLF…MLVL), 459-479 (VVGA…AMII), and 486-506 (LTYM…GNLL). The CBS 1 domain maps to 539–597 (MKRDLYYVCQNTTLSQISNLLKRVDEHSIPVVSSDNDLQLIGTISTTTLEEVIAYHERL). Disordered regions lie at residues 604 to 646 (PLSL…NNQN) and 692 to 729 (NNNF…NNNS). A compositionally biased stretch (low complexity) spans 620-646 (NDNINNNQNNNNNNNNNNNNNNSNNQN). The 54-residue stretch at 756–809 (IDSSPFQIQETMPVRKIVFMFMMLGGNILYVTNKGKLTGVVAKTELVHQNNNKH) folds into the CBS 2 domain.

It belongs to the chloride channel (TC 2.A.49) family.

The protein localises to the membrane. Voltage-gated chloride channel. Chloride channels may have several functions including the regulation of cell volume, membrane potential stabilization and signal transduction. This chain is Chloride channel protein F (clcF), found in Dictyostelium discoideum (Social amoeba).